A 443-amino-acid chain; its full sequence is Trigger factor (443 aa).

A PPIase FKBP-type domain is found at 165–250 (GDQIVMDFLG…VKEVKKPVPA (86 aa)).

This sequence belongs to the FKBP-type PPIase family. Tig subfamily.

Its subcellular location is the cytoplasm. The enzyme catalyses [protein]-peptidylproline (omega=180) = [protein]-peptidylproline (omega=0). In terms of biological role, involved in protein export. Acts as a chaperone by maintaining the newly synthesized protein in an open conformation. Functions as a peptidyl-prolyl cis-trans isomerase. The chain is Trigger factor from Roseobacter denitrificans (strain ATCC 33942 / OCh 114) (Erythrobacter sp. (strain OCh 114)).